The sequence spans 3587 residues: Surfactin synthase subunit 1 (3587 aa).

Carrier domains follow at residues 971–1046 (APRN…DHRE), 2010–2085 (APRN…ASAE), and 3038–3112 (APTT…ERAE). 3 positions are modified to O-(pantetheine 4'-phosphoryl)serine: Ser-1006, Ser-2045, and Ser-3073.

The protein belongs to the ATP-dependent AMP-binding enzyme family. Pantetheine 4'-phosphate serves as cofactor.

The protein operates within antibiotic biosynthesis; surfactin biosynthesis. In terms of biological role, this protein is a multifunctional enzyme able to activate and polymerize the amino acids Leu, Glu, Asp and Val. Activation sites for these AA consist of individual domains. This is Surfactin synthase subunit 1 (srfAA) from Bacillus subtilis (strain 168).